A 612-amino-acid polypeptide reads, in one-letter code: BTB/POZ domain-containing protein 9 (612 aa).

The BTB domain maps to 36–104; sequence GDVTFVVEKK…IYTGRATLTD (69 aa). One can recognise a BACK domain in the interval 142–240; that stretch reads VCMTFDVASL…SLTELLNVVR (99 aa). The disordered stretch occupies residues 559-612; the sequence is QQSNQKEDSSEEPGTGDPSTPNQQLDPHAPRAPSASSLPPSPGPNSRSPNQQNQ. Positions 589–612 are enriched in low complexity; it reads RAPSASSLPPSPGPNSRSPNQQNQ.

In terms of tissue distribution, expressed in the brain (at protein level).

This Mus musculus (Mouse) protein is BTB/POZ domain-containing protein 9 (Btbd9).